The sequence spans 161 residues: N5-carboxyaminoimidazole ribonucleotide mutase (161 aa).

Substrate-binding residues include Ser9, Asp12, and Arg39.

It belongs to the AIR carboxylase family. Class I subfamily.

The catalysed reaction is 5-carboxyamino-1-(5-phospho-D-ribosyl)imidazole + H(+) = 5-amino-1-(5-phospho-D-ribosyl)imidazole-4-carboxylate. It participates in purine metabolism; IMP biosynthesis via de novo pathway; 5-amino-1-(5-phospho-D-ribosyl)imidazole-4-carboxylate from 5-amino-1-(5-phospho-D-ribosyl)imidazole (N5-CAIR route): step 2/2. In terms of biological role, catalyzes the conversion of N5-carboxyaminoimidazole ribonucleotide (N5-CAIR) to 4-carboxy-5-aminoimidazole ribonucleotide (CAIR). This Vibrio cholerae serotype O1 (strain ATCC 39315 / El Tor Inaba N16961) protein is N5-carboxyaminoimidazole ribonucleotide mutase.